Here is a 132-residue protein sequence, read N- to C-terminus: Small ribosomal subunit protein uS8c (132 aa).

Belongs to the universal ribosomal protein uS8 family. In terms of assembly, part of the 30S ribosomal subunit.

It is found in the plastid. The protein resides in the chloroplast. Its function is as follows. One of the primary rRNA binding proteins, it binds directly to 16S rRNA central domain where it helps coordinate assembly of the platform of the 30S subunit. This chain is Small ribosomal subunit protein uS8c (rps8), found in Huperzia lucidula (Shining clubmoss).